A 172-amino-acid polypeptide reads, in one-letter code: Putative phosphoesterase BcerKBAB4_1135 (172 aa).

His-34 (proton donor) is an active-site residue. 2 short sequence motifs (HXTX) span residues 34–37 and 115–118; these read HITL and HLTI. The active-site Proton acceptor is the His-115.

Belongs to the 2H phosphoesterase superfamily. YjcG family.

In Bacillus mycoides (strain KBAB4) (Bacillus weihenstephanensis), this protein is Putative phosphoesterase BcerKBAB4_1135.